A 2195-amino-acid polypeptide reads, in one-letter code: Genome polyprotein (2195 aa).

Gly-2 carries N-myristoyl glycine; by host lipidation. The Cytoplasmic segment spans residues 2 to 1505 (GAQVSTQKTG…HVSRAFICLQ (1504 aa)). Residues 567-583 (LLQGDVVEAVENAVARV) form an amphipathic alpha-helix region. Active-site for protease 2A activity residues include His-882 and Asp-900. Zn(2+) is bound by residues Cys-917 and Cys-919. The active-site For protease 2A activity is the Cys-971. Zn(2+) is bound by residues Cys-977 and His-979. The segment at 1111-1183 (NNGWLKKFTE…EQSAPSQSDQ (73 aa)) is membrane-binding. Residues 1111–1249 (NNGWLKKFTE…SPGAGKSVAT (139 aa)) form an oligomerization region. The tract at residues 1132–1136 (SIKIQ) is RNA-binding. In terms of domain architecture, SF3 helicase spans 1215-1371 (EKKMSNYIQF…SMYSQNGKIN (157 aa)). Residues Cys-1379, Cys-1391, and Cys-1396 each coordinate Zn(2+). The C4-type; degenerate zinc-finger motif lies at 1379 to 1396 (CDEECCPVNFKRCCPLVC). The interval 1423–1430 (EYNHRHSV) is RNA-binding. The interval 1434–1439 (LEALFQ) is oligomerization. An intramembrane segment occupies 1506–1521 (ALTTFVSVAGIIYIIY). Topologically, residues 1522–2195 (KLFAGFQGAY…TLRRKWLDSF (674 aa)) are cytoplasmic. O-(5'-phospho-RNA)-tyrosine is present on Tyr-1531. The region spanning 1551–1729 (GPAFEFAVAM…FSAALLKHYF (179 aa)) is the Peptidase C3 domain. Catalysis depends on for protease 3C activity residues His-1590, Glu-1621, and Cys-1697. Residues 1960–2076 (GHLIAFDYSG…SYPWPIDASL (117 aa)) enclose the RdRp catalytic domain. 2 residues coordinate Mg(2+): Asp-1966 and Asp-2062.

This sequence belongs to the picornaviruses polyprotein family. As to quaternary structure, interacts with capsid protein VP1 and capsid protein VP3 to form heterotrimeric protomers. In terms of assembly, interacts with capsid protein VP0, and capsid protein VP3 to form heterotrimeric protomers. Five protomers subsequently associate to form pentamers which serve as building blocks for the capsid. Interacts with capsid protein VP2, capsid protein VP3 and capsid protein VP4 following cleavage of capsid protein VP0. Interacts with capsid protein VP1 and capsid protein VP3 in the mature capsid. As to quaternary structure, interacts with capsid protein VP0 and capsid protein VP1 to form heterotrimeric protomers. Five protomers subsequently associate to form pentamers which serve as building blocks for the capsid. Interacts with capsid protein VP4 in the mature capsid. Interacts with protein 2C; this interaction may be important for virion morphogenesis. In terms of assembly, interacts with capsid protein VP1 and capsid protein VP3. Homodimer. As to quaternary structure, homohexamer; forms a hexameric ring structure with 6-fold symmetry characteristic of AAA+ ATPases. Interacts (via N-terminus) with host RTN3 (via reticulon domain); this interaction is important for viral replication. Interacts with capsid protein VP3; this interaction may be important for virion morphogenesis. In terms of assembly, interacts with protein 3CD. Homodimer. Interacts with host GBF1. Interacts (via GOLD domain) with host ACBD3 (via GOLD domain); this interaction allows the formation of a viral protein 3A/ACBD3 heterotetramer with a 2:2 stoichiometry, which will stimulate the recruitment of host PI4KB in order to synthesize PI4P at the viral RNA replication sites. As to quaternary structure, interacts with RNA-directed RNA polymerase. In terms of assembly, interacts with protein 3AB and with RNA-directed RNA polymerase. Interacts with Viral protein genome-linked and with protein 3CD. Mg(2+) is required as a cofactor. In terms of processing, specific enzymatic cleavages in vivo by the viral proteases yield processing intermediates and the mature proteins. Post-translationally, myristoylation is required for the formation of pentamers during virus assembly. Further assembly of 12 pentamers and a molecule of genomic RNA generates the provirion. During virion maturation, immature virions are rendered infectious following cleavage of VP0 into VP4 and VP2. This maturation seems to be an autocatalytic event triggered by the presence of RNA in the capsid and it is followed by a conformational change infectious virion. In terms of processing, myristoylation is required during RNA encapsidation and formation of the mature virus particle. Post-translationally, VPg is uridylylated by the polymerase into VPg-pUpU. This acts as a nucleotide-peptide primer for the genomic RNA replication.

It is found in the virion. Its subcellular location is the host cytoplasm. It localises to the host cytoplasmic vesicle membrane. The protein resides in the host nucleus. It catalyses the reaction a ribonucleoside 5'-triphosphate + H2O = a ribonucleoside 5'-diphosphate + phosphate + H(+). The enzyme catalyses Selective cleavage of Tyr-|-Gly bond in the picornavirus polyprotein.. It carries out the reaction RNA(n) + a ribonucleoside 5'-triphosphate = RNA(n+1) + diphosphate. The catalysed reaction is Selective cleavage of Gln-|-Gly bond in the poliovirus polyprotein. In other picornavirus reactions Glu may be substituted for Gln, and Ser or Thr for Gly.. With respect to regulation, replication or transcription is subject to high level of random mutations by the nucleotide analog ribavirin. Its function is as follows. Forms an icosahedral capsid of pseudo T=3 symmetry with capsid proteins VP2 and VP3. The capsid is 300 Angstroms in diameter, composed of 60 copies of each capsid protein and enclosing the viral positive strand RNA genome. Capsid protein VP1 mainly forms the vertices of the capsid. Capsid protein VP1 interacts with host cell receptor to provide virion attachment to target host cells. This attachment induces virion internalization. Tyrosine kinases are probably involved in the entry process. After binding to its receptor, the capsid undergoes conformational changes. Capsid protein VP1 N-terminus (that contains an amphipathic alpha-helix) and capsid protein VP4 are externalized. Together, they shape a pore in the host membrane through which viral genome is translocated to host cell cytoplasm. In terms of biological role, forms an icosahedral capsid of pseudo T=3 symmetry with capsid proteins VP2 and VP3. The capsid is 300 Angstroms in diameter, composed of 60 copies of each capsid protein and enclosing the viral positive strand RNA genome. Functionally, lies on the inner surface of the capsid shell. After binding to the host receptor, the capsid undergoes conformational changes. Capsid protein VP4 is released, Capsid protein VP1 N-terminus is externalized, and together, they shape a pore in the host membrane through which the viral genome is translocated into the host cell cytoplasm. Component of immature procapsids, which is cleaved into capsid proteins VP4 and VP2 after maturation. Allows the capsid to remain inactive before the maturation step. Its function is as follows. Cysteine protease that cleaves viral polyprotein and specific host proteins. It is responsible for the autocatalytic cleavage between the P1 and P2 regions, which is the first cleavage occurring in the polyprotein. Also cleaves the host translation initiation factor EIF4G1, in order to shut down the capped cellular mRNA translation. Inhibits the host nucleus-cytoplasm protein and RNA trafficking by cleaving host members of the nuclear pores. Counteracts stress granule formation probably by antagonizing its assembly or promoting its dissassembly. In terms of biological role, plays an essential role in the virus replication cycle by acting as a viroporin. Creates a pore in the host endoplasmic reticulum and as a consequence releases Ca2+ in the cytoplasm of infected cell. In turn, high levels of cytoplasmic calcium may trigger membrane trafficking and transport of viral ER-associated proteins to viroplasms, sites of viral genome replication. Functionally, induces and associates with structural rearrangements of intracellular membranes. Displays RNA-binding, nucleotide binding and NTPase activities. May play a role in virion morphogenesis and viral RNA encapsidation by interacting with the capsid protein VP3. Localizes the viral replication complex to the surface of membranous vesicles. Together with protein 3CD binds the Cis-Active RNA Element (CRE) which is involved in RNA synthesis initiation. Acts as a cofactor to stimulate the activity of 3D polymerase, maybe through a nucleid acid chaperone activity. Its function is as follows. Localizes the viral replication complex to the surface of membranous vesicles. It inhibits host cell endoplasmic reticulum-to-Golgi apparatus transport and causes the disassembly of the Golgi complex, possibly through GBF1 interaction. This would result in depletion of MHC, trail receptors and IFN receptors at the host cell surface. Plays an essential role in viral RNA replication by recruiting ACBD3 and PI4KB at the viral replication sites, thereby allowing the formation of the rearranged membranous structures where viral replication takes place. In terms of biological role, acts as a primer for viral RNA replication and remains covalently bound to viral genomic RNA. VPg is uridylylated prior to priming replication into VPg-pUpU. The oriI viral genomic sequence may act as a template for this. The VPg-pUpU is then used as primer on the genomic RNA poly(A) by the RNA-dependent RNA polymerase to replicate the viral genome. During genome replication, the VPg-RNA linkage is removed by the host TDP2, thereby accelerating replication. During the late stage of the replication cycle, host TDP2 is excluded from sites of viral RNA synthesis and encapsidation, allowing for the generation of progeny virions. Functionally, involved in the viral replication complex and viral polypeptide maturation. It exhibits protease activity with a specificity and catalytic efficiency that is different from protease 3C. Protein 3CD lacks polymerase activity. The 3C domain in the context of protein 3CD may have an RNA binding activity. Protein 3CD binds to the 5'UTR of the viral genome. Replicates the viral genomic RNA on the surface of intracellular membranes. May form linear arrays of subunits that propagate along a strong head-to-tail interaction called interface-I. Covalently attaches UMP to a tyrosine of VPg, which is used to prime RNA synthesis. The positive stranded RNA genome is first replicated at virus induced membranous vesicles, creating a dsRNA genomic replication form. This dsRNA is then used as template to synthesize positive stranded RNA genomes. ss(+)RNA genomes are either translated, replicated or encapsidated. Its function is as follows. Major viral protease that mediates proteolytic processing of the polyprotein. Cleaves host EIF5B, contributing to host translation shutoff. Also cleaves host PABPC1, contributing to host translation shutoff. Cleaves host NLRP1, triggers host N-glycine-mediated degradation of the autoinhibitory NLRP1 N-terminal fragment. This is Genome polyprotein from Echovirus 11 (strain Gregory).